A 94-amino-acid chain; its full sequence is Pyrimidine/purine nucleoside phosphorylase (94 aa).

It belongs to the nucleoside phosphorylase PpnP family.

It catalyses the reaction a purine D-ribonucleoside + phosphate = a purine nucleobase + alpha-D-ribose 1-phosphate. It carries out the reaction adenosine + phosphate = alpha-D-ribose 1-phosphate + adenine. The catalysed reaction is cytidine + phosphate = cytosine + alpha-D-ribose 1-phosphate. The enzyme catalyses guanosine + phosphate = alpha-D-ribose 1-phosphate + guanine. It catalyses the reaction inosine + phosphate = alpha-D-ribose 1-phosphate + hypoxanthine. It carries out the reaction thymidine + phosphate = 2-deoxy-alpha-D-ribose 1-phosphate + thymine. The catalysed reaction is uridine + phosphate = alpha-D-ribose 1-phosphate + uracil. The enzyme catalyses xanthosine + phosphate = alpha-D-ribose 1-phosphate + xanthine. Functionally, catalyzes the phosphorolysis of diverse nucleosides, yielding D-ribose 1-phosphate and the respective free bases. Can use uridine, adenosine, guanosine, cytidine, thymidine, inosine and xanthosine as substrates. Also catalyzes the reverse reactions. The protein is Pyrimidine/purine nucleoside phosphorylase of Klebsiella pneumoniae (strain 342).